Here is a 770-residue protein sequence, read N- to C-terminus: uncharacterized protein (770 aa).

The interval 736–770 (GSGQPGQSPANVGDDPNRMVQSSASQTQIGHVFNN) is disordered. The span at 754 to 770 (MVQSSASQTQIGHVFNN) shows a compositional bias: polar residues.

This is an uncharacterized protein from Caenorhabditis elegans.